Reading from the N-terminus, the 432-residue chain is Ornithine decarboxylase 1A, chloroplastic (432 aa).

N6-(pyridoxal phosphate)lysine is present on Lys-95. Pyridoxal 5'-phosphate-binding positions include Ser-227, Gly-265, and 298-301; that span reads EPGR. 341–342 serves as a coordination point for substrate; sequence YD. The Proton donor; shared with dimeric partner role is filled by Cys-377. Asp-378 contacts substrate. Residue Tyr-406 coordinates pyridoxal 5'-phosphate.

This sequence belongs to the Orn/Lys/Arg decarboxylase class-II family. Homodimer. Only the dimer is catalytically active, as the active sites are constructed of residues from both monomers. Pyridoxal 5'-phosphate is required as a cofactor.

It is found in the plastid. It localises to the chloroplast. The catalysed reaction is L-ornithine + H(+) = putrescine + CO2. Its pathway is alkaloid biosynthesis; nicotine biosynthesis. It functions in the pathway amine and polyamine biosynthesis; putrescine biosynthesis via L-ornithine pathway; putrescine from L-ornithine: step 1/1. Functionally, involved in the biosynthesis of pyridine alkaloid natural products, leading mainly to the production of anabasine, anatabine, nicotine and nornicotine, effective deterrents against herbivores with antiparasitic and pesticide properties (neurotoxins); nornicotine serves as the precursor in the synthesis of the carcinogen compound N'-nitrosonornicotine (NNN). Catalyzes the first and rate-limiting step of polyamine biosynthesis that converts ornithine into putrescine, which is the precursor for the polyamines, spermidine and spermine. Polyamines are essential for cell proliferation and are implicated in cellular processes, ranging from DNA replication to apoptosis. The polypeptide is Ornithine decarboxylase 1A, chloroplastic (Nicotiana tabacum (Common tobacco)).